Consider the following 592-residue polypeptide: Aspartate--tRNA(Asp/Asn) ligase (592 aa).

An L-aspartate-binding site is contributed by Glu-175. The segment at 199 to 202 is aspartate; that stretch reads QLFK. Arg-221 is a binding site for L-aspartate. Residues 221 to 223 and Gln-230 each bind ATP; that span reads RDE. His-450 is an L-aspartate binding site. Position 483 (Glu-483) interacts with ATP. Arg-490 is a binding site for L-aspartate. Residue 535-538 coordinates ATP; the sequence is GLDR.

This sequence belongs to the class-II aminoacyl-tRNA synthetase family. Type 1 subfamily. As to quaternary structure, homodimer.

It localises to the cytoplasm. The enzyme catalyses tRNA(Asx) + L-aspartate + ATP = L-aspartyl-tRNA(Asx) + AMP + diphosphate. Its function is as follows. Aspartyl-tRNA synthetase with relaxed tRNA specificity since it is able to aspartylate not only its cognate tRNA(Asp) but also tRNA(Asn). Reaction proceeds in two steps: L-aspartate is first activated by ATP to form Asp-AMP and then transferred to the acceptor end of tRNA(Asp/Asn). The sequence is that of Aspartate--tRNA(Asp/Asn) ligase from Acinetobacter baumannii (strain AB307-0294).